The following is a 421-amino-acid chain: Elsinochrome C biosynthesis regulatory protein elcR (421 aa).

Residues M1–G16 show a composition bias toward polar residues. Positions M1–R20 are disordered. The segment at residues C27–C54 is a DNA-binding region (zn(2)-C6 fungal-type).

The protein resides in the nucleus. Transcription regulator of the gene cluster that mediates the biosynthesis of elsinochrome C, a perelyenequinone phytotoxin structurally similar to cercosporin. The sequence is that of Elsinochrome C biosynthesis regulatory protein elcR from Phaeosphaeria nodorum (strain SN15 / ATCC MYA-4574 / FGSC 10173) (Glume blotch fungus).